The sequence spans 383 residues: Queuine tRNA-ribosyltransferase (383 aa).

Catalysis depends on aspartate 90, which acts as the Proton acceptor. Residues 90 to 94 (DSGGF), aspartate 144, glutamine 193, and glycine 227 contribute to the substrate site. An RNA binding region spans residues 258–264 (GVGTPED). The Nucleophile role is filled by aspartate 277. The interval 282 to 286 (TRNAR) is RNA binding; important for wobble base 34 recognition. Residues cysteine 315, cysteine 317, cysteine 320, and histidine 346 each coordinate Zn(2+).

This sequence belongs to the queuine tRNA-ribosyltransferase family. Homodimer. Within each dimer, one monomer is responsible for RNA recognition and catalysis, while the other monomer binds to the replacement base PreQ1. Requires Zn(2+) as cofactor.

The catalysed reaction is 7-aminomethyl-7-carbaguanine + guanosine(34) in tRNA = 7-aminomethyl-7-carbaguanosine(34) in tRNA + guanine. It functions in the pathway tRNA modification; tRNA-queuosine biosynthesis. In terms of biological role, catalyzes the base-exchange of a guanine (G) residue with the queuine precursor 7-aminomethyl-7-deazaguanine (PreQ1) at position 34 (anticodon wobble position) in tRNAs with GU(N) anticodons (tRNA-Asp, -Asn, -His and -Tyr). Catalysis occurs through a double-displacement mechanism. The nucleophile active site attacks the C1' of nucleotide 34 to detach the guanine base from the RNA, forming a covalent enzyme-RNA intermediate. The proton acceptor active site deprotonates the incoming PreQ1, allowing a nucleophilic attack on the C1' of the ribose to form the product. After dissociation, two additional enzymatic reactions on the tRNA convert PreQ1 to queuine (Q), resulting in the hypermodified nucleoside queuosine (7-(((4,5-cis-dihydroxy-2-cyclopenten-1-yl)amino)methyl)-7-deazaguanosine). The polypeptide is Queuine tRNA-ribosyltransferase (Ralstonia pickettii (strain 12J)).